The chain runs to 125 residues: UPF0738 protein GK0828 (125 aa).

The protein belongs to the UPF0738 family.

This chain is UPF0738 protein GK0828, found in Geobacillus kaustophilus (strain HTA426).